Consider the following 156-residue polypeptide: Small ribosomal subunit protein uS7 (156 aa).

This sequence belongs to the universal ribosomal protein uS7 family. Part of the 30S ribosomal subunit. Contacts proteins S9 and S11.

Its function is as follows. One of the primary rRNA binding proteins, it binds directly to 16S rRNA where it nucleates assembly of the head domain of the 30S subunit. Is located at the subunit interface close to the decoding center, probably blocks exit of the E-site tRNA. This chain is Small ribosomal subunit protein uS7, found in Hamiltonella defensa subsp. Acyrthosiphon pisum (strain 5AT).